The primary structure comprises 156 residues: Small ribosomal subunit protein uS7 (156 aa).

This sequence belongs to the universal ribosomal protein uS7 family. As to quaternary structure, part of the 30S ribosomal subunit. Contacts proteins S9 and S11.

Its function is as follows. One of the primary rRNA binding proteins, it binds directly to 16S rRNA where it nucleates assembly of the head domain of the 30S subunit. Is located at the subunit interface close to the decoding center, probably blocks exit of the E-site tRNA. This chain is Small ribosomal subunit protein uS7, found in Streptomyces griseus subsp. griseus (strain JCM 4626 / CBS 651.72 / NBRC 13350 / KCC S-0626 / ISP 5235).